We begin with the raw amino-acid sequence, 213 residues long: Thymidylate kinase (213 aa).

10–17 lines the ATP pocket; that stretch reads GLEGAGKT.

The protein belongs to the thymidylate kinase family.

It carries out the reaction dTMP + ATP = dTDP + ADP. Functionally, phosphorylation of dTMP to form dTDP in both de novo and salvage pathways of dTTP synthesis. The protein is Thymidylate kinase of Klebsiella pneumoniae subsp. pneumoniae (strain ATCC 700721 / MGH 78578).